The primary structure comprises 348 residues: NADH-ubiquinone oxidoreductase chain 2 (348 aa).

10 helical membrane-spanning segments follow: residues 3–23 (PFIL…TFAS), 24–44 (SHWL…IPLM), 60–80 (FITQ…NAWI), 95–115 (ASML…HFWL), 136–156 (LAPF…ITFL), 177–197 (ILAY…QFNQ), 198–218 (QLAL…FMIF), 239–259 (LTAI…LSGF), 273–293 (DIPL…YFYL), and 325–345 (LAIS…TLAL).

Belongs to the complex I subunit 2 family.

It is found in the mitochondrion inner membrane. The catalysed reaction is a ubiquinone + NADH + 5 H(+)(in) = a ubiquinol + NAD(+) + 4 H(+)(out). In terms of biological role, core subunit of the mitochondrial membrane respiratory chain NADH dehydrogenase (Complex I) that is believed to belong to the minimal assembly required for catalysis. Complex I functions in the transfer of electrons from NADH to the respiratory chain. The immediate electron acceptor for the enzyme is believed to be ubiquinone. The sequence is that of NADH-ubiquinone oxidoreductase chain 2 (MT-ND2) from Gadus morhua (Atlantic cod).